Consider the following 342-residue polypeptide: MSAPGGPLARLEARLTREWQRRGALAWALTPFACVFGLCAALRRTAYAQGWKQPVDVGVPVVVVGNVTVGGTGKTPTVIALVDALRAAGFTPGVVSRGYGANVKAPTAVTPASRAGAAGDEPLLIARRTGAPVWVCPDRVAAAQALRAAHPDVDVIVSDDGLQHYRLARTVELVVFDHRLGGNGFLLPAGPLREPLSRHRDATLVNDPYSSALPPWPDTYALALTPGAAWHLDQPTLRRPLSQFANERVLAAAGIGAPERFFATLRAAGLAPATRALPDHYAFADNPFVDDAVDAILITEKDAVKLGASWRDARLWVVPVEAALDPRLIALVVEKLRGRSPA.

An ATP-binding site is contributed by 68–75 (TVGGTGKT).

The protein belongs to the LpxK family.

The enzyme catalyses a lipid A disaccharide + ATP = a lipid IVA + ADP + H(+). The protein operates within glycolipid biosynthesis; lipid IV(A) biosynthesis; lipid IV(A) from (3R)-3-hydroxytetradecanoyl-[acyl-carrier-protein] and UDP-N-acetyl-alpha-D-glucosamine: step 6/6. In terms of biological role, transfers the gamma-phosphate of ATP to the 4'-position of a tetraacyldisaccharide 1-phosphate intermediate (termed DS-1-P) to form tetraacyldisaccharide 1,4'-bis-phosphate (lipid IVA). This is Tetraacyldisaccharide 4'-kinase from Burkholderia cenocepacia (strain ATCC BAA-245 / DSM 16553 / LMG 16656 / NCTC 13227 / J2315 / CF5610) (Burkholderia cepacia (strain J2315)).